The primary structure comprises 206 residues: Ribosomal RNA large subunit methyltransferase E (206 aa).

Positions 61, 63, 81, 97, and 122 each coordinate S-adenosyl-L-methionine. Catalysis depends on lysine 162, which acts as the Proton acceptor.

This sequence belongs to the class I-like SAM-binding methyltransferase superfamily. RNA methyltransferase RlmE family.

It is found in the cytoplasm. The catalysed reaction is uridine(2552) in 23S rRNA + S-adenosyl-L-methionine = 2'-O-methyluridine(2552) in 23S rRNA + S-adenosyl-L-homocysteine + H(+). Functionally, specifically methylates the uridine in position 2552 of 23S rRNA at the 2'-O position of the ribose in the fully assembled 50S ribosomal subunit. This is Ribosomal RNA large subunit methyltransferase E from Neisseria gonorrhoeae (strain ATCC 700825 / FA 1090).